We begin with the raw amino-acid sequence, 1806 residues long: Focadhesin (1806 aa).

A disordered region spans residues 733 to 760 (ARPIPKQPEVEDEVKQNEEENEEEEDIS).

Its subcellular location is the cell junction. The protein localises to the focal adhesion. The protein resides in the cytoplasm. It localises to the cytosol. Required for the maintenance of SKIC2 and SKIC3 proteostatic levels in the liver. May be involved in the regulation of RNA degradation by the exosome complex. The polypeptide is Focadhesin (focad) (Danio rerio (Zebrafish)).